The primary structure comprises 392 residues: Riboflavin biosynthesis protein PYRD, chloroplastic (392 aa).

A chloroplast-targeting transit peptide spans 1-26 (MASSLVSRPHLTQRPVRAATLASATR). In terms of domain architecture, CMP/dCMP-type deaminase spans 46–168 (LDDAHYMRRC…KLQGAGISVR (123 aa)). Histidine 95 provides a ligand contact to Zn(2+). Glutamate 97 functions as the Proton donor in the catalytic mechanism. Positions 120 and 129 each coordinate Zn(2+).

Zn(2+) serves as cofactor.

The protein localises to the plastid. It is found in the chloroplast. The enzyme catalyses 2,5-diamino-6-hydroxy-4-(5-phosphoribosylamino)-pyrimidine + H2O + H(+) = 5-amino-6-(5-phospho-D-ribosylamino)uracil + NH4(+). It participates in cofactor biosynthesis; riboflavin biosynthesis; 5-amino-6-(D-ribitylamino)uracil from GTP: step 2/4. Monofunctional pyrimidine deaminase involved in the riboflavin biosynthesis pathway. Also has a reductase domain that lacks catalytically essential substrate-binding residues. This is Riboflavin biosynthesis protein PYRD, chloroplastic (PYRD) from Zea mays (Maize).